A 194-amino-acid polypeptide reads, in one-letter code: Peptidyl-tRNA hydrolase (194 aa).

TRNA is bound at residue Y17. The Proton acceptor role is filled by H22. Residues F68, N70, and N116 each coordinate tRNA.

It belongs to the PTH family. Monomer.

The protein localises to the cytoplasm. It catalyses the reaction an N-acyl-L-alpha-aminoacyl-tRNA + H2O = an N-acyl-L-amino acid + a tRNA + H(+). In terms of biological role, hydrolyzes ribosome-free peptidyl-tRNAs (with 1 or more amino acids incorporated), which drop off the ribosome during protein synthesis, or as a result of ribosome stalling. Catalyzes the release of premature peptidyl moieties from peptidyl-tRNA molecules trapped in stalled 50S ribosomal subunits, and thus maintains levels of free tRNAs and 50S ribosomes. The protein is Peptidyl-tRNA hydrolase of Shewanella sediminis (strain HAW-EB3).